Reading from the N-terminus, the 271-residue chain is Extracellular metalloprotease TRV_06892 (271 aa).

The first 19 residues, 1 to 19 (MRFSVLLTGLAAAGSIATA), serve as a signal peptide directing secretion. The N-linked (GlcNAc...) asparagine glycan is linked to asparagine 136. Histidine 185 is a Zn(2+) binding site. Glutamate 186 is an active-site residue. Zn(2+) is bound at residue histidine 189. Asparagine 200 is a glycosylation site (N-linked (GlcNAc...) asparagine). Cysteine 222 and cysteine 248 are oxidised to a cystine.

It belongs to the peptidase M43B family.

It localises to the secreted. Its function is as follows. Secreted metalloproteinase that allows assimilation of proteinaceous substrates. Plays a pivotal role as a pathogenicity determinant during infections and contributes to the ability of the pathogen to persist within the mammalian host. The sequence is that of Extracellular metalloprotease TRV_06892 from Trichophyton verrucosum (strain HKI 0517).